A 159-amino-acid chain; its full sequence is ATP synthase subunit b (159 aa).

Residues 8-28 (ILATIINFIILILILKHFFWD) traverse the membrane as a helical segment.

The protein belongs to the ATPase B chain family. In terms of assembly, F-type ATPases have 2 components, F(1) - the catalytic core - and F(0) - the membrane proton channel. F(1) has five subunits: alpha(3), beta(3), gamma(1), delta(1), epsilon(1). F(0) has three main subunits: a(1), b(2) and c(10-14). The alpha and beta chains form an alternating ring which encloses part of the gamma chain. F(1) is attached to F(0) by a central stalk formed by the gamma and epsilon chains, while a peripheral stalk is formed by the delta and b chains.

The protein localises to the cell membrane. Its function is as follows. F(1)F(0) ATP synthase produces ATP from ADP in the presence of a proton or sodium gradient. F-type ATPases consist of two structural domains, F(1) containing the extramembraneous catalytic core and F(0) containing the membrane proton channel, linked together by a central stalk and a peripheral stalk. During catalysis, ATP synthesis in the catalytic domain of F(1) is coupled via a rotary mechanism of the central stalk subunits to proton translocation. In terms of biological role, component of the F(0) channel, it forms part of the peripheral stalk, linking F(1) to F(0). This chain is ATP synthase subunit b, found in Clostridium perfringens (strain ATCC 13124 / DSM 756 / JCM 1290 / NCIMB 6125 / NCTC 8237 / Type A).